The primary structure comprises 482 residues: tRNA sulfurtransferase (482 aa).

Residues lysine 61 to arginine 165 enclose the THUMP domain. ATP is bound by residues leucine 183–isoleucine 184, lysine 265, glycine 287, and glutamine 296. Residues cysteine 344 and cysteine 456 are joined by a disulfide bond. The 79-residue stretch at valine 404–proline 482 folds into the Rhodanese domain. The active-site Cysteine persulfide intermediate is the cysteine 456.

This sequence belongs to the ThiI family.

It is found in the cytoplasm. The catalysed reaction is [ThiI sulfur-carrier protein]-S-sulfanyl-L-cysteine + a uridine in tRNA + 2 reduced [2Fe-2S]-[ferredoxin] + ATP + H(+) = [ThiI sulfur-carrier protein]-L-cysteine + a 4-thiouridine in tRNA + 2 oxidized [2Fe-2S]-[ferredoxin] + AMP + diphosphate. It carries out the reaction [ThiS sulfur-carrier protein]-C-terminal Gly-Gly-AMP + S-sulfanyl-L-cysteinyl-[cysteine desulfurase] + AH2 = [ThiS sulfur-carrier protein]-C-terminal-Gly-aminoethanethioate + L-cysteinyl-[cysteine desulfurase] + A + AMP + 2 H(+). It functions in the pathway cofactor biosynthesis; thiamine diphosphate biosynthesis. Catalyzes the ATP-dependent transfer of a sulfur to tRNA to produce 4-thiouridine in position 8 of tRNAs, which functions as a near-UV photosensor. Also catalyzes the transfer of sulfur to the sulfur carrier protein ThiS, forming ThiS-thiocarboxylate. This is a step in the synthesis of thiazole, in the thiamine biosynthesis pathway. The sulfur is donated as persulfide by IscS. This chain is tRNA sulfurtransferase, found in Vibrio atlanticus (strain LGP32) (Vibrio splendidus (strain Mel32)).